The chain runs to 238 residues: Transcription factor PCL1 (238 aa).

Low complexity predominate over residues 71 to 90 (RLRRASSSSSSSFPAFASKG). Positions 71–119 (RLRRASSSSSSSFPAFASKGAGTGADEAESGGGADGGNGNTNNSSSKRA) are disordered. The segment covering 100–109 (SGGGADGGNG) has biased composition (gly residues). Positions 115 to 174 (SSKRARLVWTPQLHKRFVEVVAHLGMKNAVPKTIMQLMNVEGLTRENVASHLQKYRLYVK) form a DNA-binding region, myb-like GARP.

The protein localises to the nucleus. Transcription factor that is essential for the generation of the circadian clock oscillation. Binds to specific sites on CCA1 promoter leading to CCA1 activation. The sequence is that of Transcription factor PCL1 (PCL1) from Oryza sativa subsp. japonica (Rice).